Here is a 251-residue protein sequence, read N- to C-terminus: Ribonuclease HII (251 aa).

Positions 32–223 (GPVAGVDEAG…VRERLGLRPL (192 aa)) constitute an RNase H type-2 domain. Positions 38, 39, and 132 each coordinate a divalent metal cation.

This sequence belongs to the RNase HII family. It depends on Mn(2+) as a cofactor. Mg(2+) is required as a cofactor.

The protein localises to the cytoplasm. It carries out the reaction Endonucleolytic cleavage to 5'-phosphomonoester.. Endonuclease that specifically degrades the RNA of RNA-DNA hybrids. This chain is Ribonuclease HII, found in Nocardia farcinica (strain IFM 10152).